Consider the following 188-residue polypeptide: Large ribosomal subunit protein eL18z (188 aa).

The protein belongs to the eukaryotic ribosomal protein eL18 family.

The sequence is that of Large ribosomal subunit protein eL18z (RPL18A) from Arabidopsis thaliana (Mouse-ear cress).